The primary structure comprises 362 residues: UDP-galactose transporter homolog 1 (362 aa).

A run of 5 helical transmembrane segments spans residues 7-27 (IFPV…WALV), 45-65 (CPNV…YFYM), 111-131 (LTYM…HLII), 141-161 (SVVA…GSKG), and 175-195 (FFQK…DGLT). Residue Asn196 is glycosylated (N-linked (GlcNAc...) asparagine). 4 helical membrane-spanning segments follow: residues 234-254 (HMMF…LLVI), 271-291 (IIVS…CFIF), 296-316 (LYGS…SMLL), and 317-337 (SIIV…VIVF).

This sequence belongs to the nucleotide-sugar transporter family. SLC35B subfamily.

The protein localises to the endoplasmic reticulum membrane. In terms of biological role, may be involved in specific transport of UDP-Gal from the cytosol to the Golgi lumen. Involved in the maintenance of optimal conditions for the folding of secretory pathway proteins in the endoplasmic reticulum. The protein is UDP-galactose transporter homolog 1 (HUT1) of Candida glabrata (strain ATCC 2001 / BCRC 20586 / JCM 3761 / NBRC 0622 / NRRL Y-65 / CBS 138) (Yeast).